Consider the following 509-residue polypeptide: DEAD-box ATP-dependent RNA helicase CshA (509 aa).

The Q motif motif lies at 2–30 (QNFKELGISDKTVQTLEAMGFKEPTPIQK). The Helicase ATP-binding domain maps to 33-203 (IPYALEGDDI…QQFMKAPKII (171 aa)). An ATP-binding site is contributed by 46–53 (AQTGTGKT). A DEAD box motif is present at residues 150 to 153 (DEAD). In terms of domain architecture, Helicase C-terminal spans 214–375 (QIDEYYTIVK…LRPPHRKEVL (162 aa)). 2 stretches are compositionally biased toward basic residues: residues 440–459 (ARKN…KRGN) and 467–482 (RRSK…KKNQ). The disordered stretch occupies residues 440–509 (ARKNRSSKGG…KGRTFADHQK (70 aa)). Residues 483 to 492 (KKFDRRDKQQ) show a composition bias toward basic and acidic residues.

It belongs to the DEAD box helicase family. CshA subfamily. Oligomerizes, may be a member of the RNA degradosome.

The protein localises to the cytoplasm. It carries out the reaction ATP + H2O = ADP + phosphate + H(+). DEAD-box RNA helicase possibly involved in RNA degradation. Unwinds dsRNA in both 5'- and 3'-directions, has RNA-dependent ATPase activity. The sequence is that of DEAD-box ATP-dependent RNA helicase CshA from Staphylococcus epidermidis (strain ATCC 35984 / DSM 28319 / BCRC 17069 / CCUG 31568 / BM 3577 / RP62A).